Reading from the N-terminus, the 366-residue chain is 15-cis-zeta-carotene isomerase, chloroplastic (366 aa).

The transit peptide at 1–45 (MASQLRLHLAATPPLLPHRRPHLARPLCPTLNPIRAPLPPLSRVL) directs the protein to the chloroplast. A run of 6 helical transmembrane segments spans residues 94 to 114 (SWAY…VLWI), 136 to 156 (EVVM…MASL), 171 to 191 (VLFA…FINH), 203 to 223 (GITG…FFLY), 260 to 280 (VIWC…AASV), and 338 to 358 (LPYV…PLMQ).

In terms of tissue distribution, expressed in leaves and roots, and at lower levels in embryos and endosperm.

It localises to the plastid. The protein resides in the chloroplast membrane. The catalysed reaction is 9,9',15-tri-cis-zeta-carotene = 9,9'-di-cis-zeta-carotene. In terms of biological role, isomerase involved in the biosynthesis of carotenoids. Catalyzes the cis- to trans-conversion of the 15-cis-bond in 9,15,9'-tri-cis-zeta-carotene. The sequence is that of 15-cis-zeta-carotene isomerase, chloroplastic from Zea mays (Maize).